A 94-amino-acid chain; its full sequence is Putative toxin RelE4 (94 aa).

Belongs to the RelE toxin family.

In terms of biological role, toxic component of a type II toxin-antitoxin (TA) system. Its cognate antitoxin is RelB4 (Potential). In Methanocaldococcus jannaschii (strain ATCC 43067 / DSM 2661 / JAL-1 / JCM 10045 / NBRC 100440) (Methanococcus jannaschii), this protein is Putative toxin RelE4 (relE4).